Consider the following 247-residue polypeptide: Small ribosomal subunit protein uS2 (247 aa).

This sequence belongs to the universal ribosomal protein uS2 family.

The chain is Small ribosomal subunit protein uS2 from Cupriavidus taiwanensis (strain DSM 17343 / BCRC 17206 / CCUG 44338 / CIP 107171 / LMG 19424 / R1) (Ralstonia taiwanensis (strain LMG 19424)).